Consider the following 187-residue polypeptide: Elongation factor P (187 aa).

The protein belongs to the elongation factor P family.

It localises to the cytoplasm. Its pathway is protein biosynthesis; polypeptide chain elongation. In terms of biological role, involved in peptide bond synthesis. Stimulates efficient translation and peptide-bond synthesis on native or reconstituted 70S ribosomes in vitro. Probably functions indirectly by altering the affinity of the ribosome for aminoacyl-tRNA, thus increasing their reactivity as acceptors for peptidyl transferase. The chain is Elongation factor P from Rhodospirillum rubrum (strain ATCC 11170 / ATH 1.1.1 / DSM 467 / LMG 4362 / NCIMB 8255 / S1).